The primary structure comprises 357 residues: Malonyl CoA reductase (NADP) (357 aa).

NADP(+) is bound at residue 13–16 (TGLV). Cys150 (acyl-thioester intermediate) is an active-site residue. 180–181 (SG) is a binding site for NADP(+). Residue His245 is the Proton acceptor of the active site. An NADP(+)-binding site is contributed by 332-333 (NT).

The protein belongs to the aspartate-semialdehyde dehydrogenase family. Homotetramer.

It catalyses the reaction 3-oxopropanoate + NADP(+) + CoA = malonyl-CoA + NADPH + H(+). Its function is as follows. Catalyzes the reduction of malonyl-CoA to malonate semialdehyde, a key step in the 3-hydroxypropanoate and the 3-hydroxypropanoate/4-hydroxybutyrate cycles. This is Malonyl CoA reductase (NADP) from Metallosphaera sedula (strain ATCC 51363 / DSM 5348 / JCM 9185 / NBRC 15509 / TH2).